Here is a 620-residue protein sequence, read N- to C-terminus: MSFDIAKYPTLALVDSTQELRLLPKESLPKLCDELRRYLLDSVSRSSGHFASGLGTVELTVALHYVYNTPFDRLIWDVGHQAYPHKILTGRRDKIGTIRQKGGLHPFPWRGESEYDVLSVGHSSTSISAGIGVAIAAAKEDKQRRAVCVIGDGAITAGMAFEAMNHAGDIKPDLLVVLNDNEMSISENVGALNNHLAQLLSGKLYSTLREGGKKVFSGVPPIKELLKRTEEHIKGMVVPGTLFEELGFNYIGPVDGHDVLGLVSTLKNMRDLKGPQFLHIMTKKGRGYEPAEKDPITFHAVPKFDHTSGVLPKSSGGLPSYSKIFGDWLCETAAKDSKLMAITPAMREGSGMVEFSKKFPDQYFDVAIAEQHAVTFAAGLAIGDYKPVVAIYSTFLQRAYDQVIHDVAIQKLPVLFAIDRAGIVGADGQTHQGAFDLSFLRCIPDMVVMTPSDENECRQMLHTGYHYSDGPCAVRYPRGSGTGATLEPLASLPIGKGVVKRQGEKIAILNFGTLLPEAAAVADKLNATLVDMRFVKPLDTALILQLAGEHDALVTLEENAIMGGAGSGVNEVLMAHRRAVPVLNIGLPDYFIPQGTQEEIRADLGLDAAGIEAKIHDWLA.

Thiamine diphosphate contacts are provided by residues His80 and 121–123 (GHS). Residue Asp152 participates in Mg(2+) binding. Residues 153–154 (GA), Asn181, Tyr288, and Glu370 each bind thiamine diphosphate. Residue Asn181 participates in Mg(2+) binding.

The protein belongs to the transketolase family. DXPS subfamily. In terms of assembly, homodimer. Mg(2+) serves as cofactor. Requires thiamine diphosphate as cofactor.

The catalysed reaction is D-glyceraldehyde 3-phosphate + pyruvate + H(+) = 1-deoxy-D-xylulose 5-phosphate + CO2. It functions in the pathway metabolic intermediate biosynthesis; 1-deoxy-D-xylulose 5-phosphate biosynthesis; 1-deoxy-D-xylulose 5-phosphate from D-glyceraldehyde 3-phosphate and pyruvate: step 1/1. Functionally, catalyzes the acyloin condensation reaction between C atoms 2 and 3 of pyruvate and glyceraldehyde 3-phosphate to yield 1-deoxy-D-xylulose-5-phosphate (DXP). This chain is 1-deoxy-D-xylulose-5-phosphate synthase, found in Klebsiella pneumoniae (strain 342).